Here is a 78-residue protein sequence, read N- to C-terminus: ATP synthase subunit c (78 aa).

2 helical membrane passes run 11 to 31 and 53 to 73; these read FIGA…VGHV and LFIG…VALL.

Belongs to the ATPase C chain family. As to quaternary structure, F-type ATPases have 2 components, F(1) - the catalytic core - and F(0) - the membrane proton channel. F(1) has five subunits: alpha(3), beta(3), gamma(1), delta(1), epsilon(1). F(0) has four main subunits: a(1), b(1), b'(1) and c(10-14). The alpha and beta chains form an alternating ring which encloses part of the gamma chain. F(1) is attached to F(0) by a central stalk formed by the gamma and epsilon chains, while a peripheral stalk is formed by the delta, b and b' chains.

It localises to the cell inner membrane. In terms of biological role, f(1)F(0) ATP synthase produces ATP from ADP in the presence of a proton or sodium gradient. F-type ATPases consist of two structural domains, F(1) containing the extramembraneous catalytic core and F(0) containing the membrane proton channel, linked together by a central stalk and a peripheral stalk. During catalysis, ATP synthesis in the catalytic domain of F(1) is coupled via a rotary mechanism of the central stalk subunits to proton translocation. Its function is as follows. Key component of the F(0) channel; it plays a direct role in translocation across the membrane. A homomeric c-ring of between 10-14 subunits forms the central stalk rotor element with the F(1) delta and epsilon subunits. The sequence is that of ATP synthase subunit c from Jannaschia sp. (strain CCS1).